Reading from the N-terminus, the 400-residue chain is Elongation factor Tu (400 aa).

The tr-type G domain occupies 10–208; that stretch reads KPHVNVGTIG…AMDNYIPDPQ (199 aa). The interval 19-26 is G1; sequence GHIDHGKS. Position 19-26 (19-26) interacts with GTP; sequence GHIDHGKS. Residue S26 participates in Mg(2+) binding. Residues 60–64 form a G2 region; that stretch reads GITIN. A G3 region spans residues 81–84; that stretch reads DCPG. GTP contacts are provided by residues 81–85 and 136–139; these read DCPGH and NKTD. The tract at residues 136–139 is G4; it reads NKTD. Positions 174–176 are G5; it reads SAL.

It belongs to the TRAFAC class translation factor GTPase superfamily. Classic translation factor GTPase family. EF-Tu/EF-1A subfamily. As to quaternary structure, monomer.

Its subcellular location is the cytoplasm. It catalyses the reaction GTP + H2O = GDP + phosphate + H(+). In terms of biological role, GTP hydrolase that promotes the GTP-dependent binding of aminoacyl-tRNA to the A-site of ribosomes during protein biosynthesis. The chain is Elongation factor Tu from Thermotoga maritima (strain ATCC 43589 / DSM 3109 / JCM 10099 / NBRC 100826 / MSB8).